A 249-amino-acid chain; its full sequence is ATP-dependent Clp protease proteolytic subunit (249 aa).

The active-site Nucleophile is Ser107. His132 is an active-site residue. The interval 212–249 (ESASQDNSLDPDAPDESASQDNSLDPDAPDETRPPKLR) is disordered.

It belongs to the peptidase S14 family. In terms of assembly, component of the chloroplastic Clp protease core complex.

Its subcellular location is the plastid. It is found in the chloroplast stroma. The catalysed reaction is Hydrolysis of proteins to small peptides in the presence of ATP and magnesium. alpha-casein is the usual test substrate. In the absence of ATP, only oligopeptides shorter than five residues are hydrolyzed (such as succinyl-Leu-Tyr-|-NHMec, and Leu-Tyr-Leu-|-Tyr-Trp, in which cleavage of the -Tyr-|-Leu- and -Tyr-|-Trp bonds also occurs).. Its function is as follows. Cleaves peptides in various proteins in a process that requires ATP hydrolysis. Has a chymotrypsin-like activity. Plays a major role in the degradation of misfolded proteins. In Oenothera elata subsp. hookeri (Hooker's evening primrose), this protein is ATP-dependent Clp protease proteolytic subunit.